Here is a 238-residue protein sequence, read N- to C-terminus: Glycerol uptake facilitator protein 4 (238 aa).

The next 2 membrane-spanning stretches (helical) occupy residues 2–22 and 39–59; these read IHQL…GVGV and IFAI…FGNV. Residues 62-64 carry the NPA 1 motif; the sequence is NPA. Helical transmembrane passes span 80–100, 135–155, and 158–178; these read FIPY…IVWI, FFVE…ISEV, and PGIV…GLGG. Positions 185–187 match the NPA 2 motif; the sequence is NLA. Residues 211–231 traverse the membrane as a helical segment; the sequence is YGIIVPGIAPFVGAACAALFM.

This sequence belongs to the MIP/aquaporin (TC 1.A.8) family.

It localises to the cell membrane. Transporter that facilitates the transmembrane diffusion of water, dihydroxyacetone, glycerol, urea, H(2)O(2) and D/L-lactic acid. Is involved in the cellular racemization of lactate and lactate metabolism, but has likely a more general physiological role. The transported molecule is indeed lactic acid and not the lactate anion, in agreement with the assumption that, with very few exceptions, MIPs (major intrinsic proteins) only facilitate the transport of uncharged solutes. In Lactiplantibacillus plantarum (strain ATCC BAA-793 / NCIMB 8826 / WCFS1) (Lactobacillus plantarum), this protein is Glycerol uptake facilitator protein 4.